The following is a 464-amino-acid chain: tRNA modification GTPase MnmE (464 aa).

R27, E90, and K129 together coordinate (6S)-5-formyl-5,6,7,8-tetrahydrofolate. The 163-residue stretch at 222-384 (GITLVLAGSV…LYDKIRTLIS (163 aa)) folds into the TrmE-type G domain. Residues 232-237 (NAGKSS), 251-257 (SSYPGTT), and 276-279 (DTAG) contribute to the GTP site. Residues S236 and T257 each coordinate Mg(2+). K464 contributes to the (6S)-5-formyl-5,6,7,8-tetrahydrofolate binding site.

It belongs to the TRAFAC class TrmE-Era-EngA-EngB-Septin-like GTPase superfamily. TrmE GTPase family. Homodimer. Heterotetramer of two MnmE and two MnmG subunits. Requires K(+) as cofactor.

It localises to the cytoplasm. Its function is as follows. Exhibits a very high intrinsic GTPase hydrolysis rate. Involved in the addition of a carboxymethylaminomethyl (cmnm) group at the wobble position (U34) of certain tRNAs, forming tRNA-cmnm(5)s(2)U34. The chain is tRNA modification GTPase MnmE from Borreliella afzelii (strain PKo) (Borrelia afzelii).